We begin with the raw amino-acid sequence, 289 residues long: Elongation factor Ts (289 aa).

Residues 82–85 (TDFV) are involved in Mg(2+) ion dislocation from EF-Tu.

Belongs to the EF-Ts family.

It is found in the cytoplasm. Associates with the EF-Tu.GDP complex and induces the exchange of GDP to GTP. It remains bound to the aminoacyl-tRNA.EF-Tu.GTP complex up to the GTP hydrolysis stage on the ribosome. The protein is Elongation factor Ts of Chloroherpeton thalassium (strain ATCC 35110 / GB-78).